Consider the following 771-residue polypeptide: Probable exo-1,4-beta-xylosidase bxlB (771 aa).

A signal peptide spans 1–25 (MAHITSWHYGNAIALLVSLAPGALS). Residue asparagine 67 is glycosylated (N-linked (GlcNAc...) asparagine). Residue aspartate 293 is part of the active site. Asparagine 305, asparagine 345, asparagine 423, and asparagine 464 each carry an N-linked (GlcNAc...) asparagine glycan.

This sequence belongs to the glycosyl hydrolase 3 family.

Its subcellular location is the secreted. It catalyses the reaction Hydrolysis of (1-&gt;4)-beta-D-xylans, to remove successive D-xylose residues from the non-reducing termini.. It functions in the pathway glycan degradation; xylan degradation. Xylan 1,4-beta-xylosidase involved in the hydrolysis of xylan, a major structural heterogeneous polysaccharide found in plant biomass representing the second most abundant polysaccharide in the biosphere, after cellulose. The sequence is that of Probable exo-1,4-beta-xylosidase bxlB (bxlB) from Aspergillus fumigatus (strain CBS 144.89 / FGSC A1163 / CEA10) (Neosartorya fumigata).